Here is an 852-residue protein sequence, read N- to C-terminus: Probable nitrite reductase-hydroxylamine oxidoreductase fusion protein (852 aa).

An N-terminal signal peptide occupies residues 1–27 (MLNKSAALVPVVLAFLFLFLCFQCLYA). Residues 28-327 (DIRCLTGKDG…DEGRKTLSAP (300 aa)) are nitrite reductase domain. Plastocyanin-like domains lie at 72–169 (VPGP…IVEP) and 217–307 (GETW…VEEG). Residues H102 and H145 each contribute to the Cu cation site. Residues 328–827 (GQDRQPPTLE…ISWWWGTAQG (500 aa)) are hydroxylamine oxidoreductase domain. C406, C409, H410, H426, C463, C466, H467, H471, C483, C486, H487, H505, H537, C543, C546, H547, H550, C563, C566, H567, C614, C617, H618, C686, C689, H690, and H813 together coordinate heme.

In the N-terminal section; belongs to the multicopper oxidase family. Cu cation is required as a cofactor. It depends on heme as a cofactor.

Its subcellular location is the encapsulin nanocompartment. It carries out the reaction hydroxylamine + 4 Fe(III)-[cytochrome c] + H2O = 4 Fe(II)-[cytochrome c] + nitrite + 5 H(+). It catalyses the reaction nitric oxide + Fe(III)-[cytochrome c] + H2O = Fe(II)-[cytochrome c] + nitrite + 2 H(+). Functionally, a nitrite reductase-hydroxylamine oxidoreductase protein that probably functions in the type 1 encapsulin nanocompartment. Probably involved in reductive catalysis. Targeted to the encapsulin nanocompartment by association with the diheme domain of the encapsulin shell protein (AC Q1Q6L7). Catalyzes the reduction of nitrite to nitric oxide (NO). Catalyzes the oxidation of hydroxylamine to nitrite. This chain is Probable nitrite reductase-hydroxylamine oxidoreductase fusion protein, found in Kuenenia stuttgartiensis.